We begin with the raw amino-acid sequence, 196 residues long: MEMREAYIERQTKETRIRVKLNLDGAGTAQVDTGIGFFDHMLEALARFGYLDLEVAAEGDLQVDPHHTIEDCGLVFGQAIREALGERRGIERVGDTLLPMDEALVQVALDLSNRPYLVWDVECPEGMVGGFPVEMAEEFFRAVSVQAGITLHIRLFSGKNRHHILEAIFKGFGRALGLALRENPRFQGVLSTKGVL.

Belongs to the imidazoleglycerol-phosphate dehydratase family.

It localises to the cytoplasm. The catalysed reaction is D-erythro-1-(imidazol-4-yl)glycerol 3-phosphate = 3-(imidazol-4-yl)-2-oxopropyl phosphate + H2O. Its pathway is amino-acid biosynthesis; L-histidine biosynthesis; L-histidine from 5-phospho-alpha-D-ribose 1-diphosphate: step 6/9. This is Imidazoleglycerol-phosphate dehydratase from Desulfitobacterium hafniense (strain Y51).